Reading from the N-terminus, the 55-residue chain is Large ribosomal subunit protein bL33 (55 aa).

The protein belongs to the bacterial ribosomal protein bL33 family.

The polypeptide is Large ribosomal subunit protein bL33 (Gluconobacter oxydans (strain 621H) (Gluconobacter suboxydans)).